We begin with the raw amino-acid sequence, 242 residues long: Sugar fermentation stimulation protein homolog (242 aa).

This sequence belongs to the SfsA family.

This Methanosphaera stadtmanae (strain ATCC 43021 / DSM 3091 / JCM 11832 / MCB-3) protein is Sugar fermentation stimulation protein homolog.